Here is a 222-residue protein sequence, read N- to C-terminus: Small ribosomal subunit protein uS3 (222 aa).

Positions 39-108 (IRRHIKEKLY…TISLDIKEIK (70 aa)) constitute a KH type-2 domain.

The protein belongs to the universal ribosomal protein uS3 family. In terms of assembly, part of the 30S ribosomal subunit. Forms a tight complex with proteins S10 and S14.

Binds the lower part of the 30S subunit head. Binds mRNA in the 70S ribosome, positioning it for translation. This is Small ribosomal subunit protein uS3 from Caldicellulosiruptor bescii (strain ATCC BAA-1888 / DSM 6725 / KCTC 15123 / Z-1320) (Anaerocellum thermophilum).